The primary structure comprises 974 residues: Apical junction component 1 homolog (974 aa).

Disordered stretches follow at residues 23–137 (PGLT…PSYP), 201–233 (ARSS…PRHV), and 306–326 (CSRP…GGSY). Position 52 is a phosphoserine (Ser-52). The segment covering 69–79 (EPPPPEPAPPR) has biased composition (pro residues). The span at 116-134 (RGREAQRAVRVEGSPRREP) shows a compositional bias: basic and acidic residues. Ser-129 is modified (phosphoserine). Polar residues predominate over residues 201 to 216 (ARSSRSCAPRETTSWA). Arg-322 carries the post-translational modification Omega-N-methylarginine. Phosphoserine occurs at positions 468, 509, and 512. A disordered region spans residues 539-576 (DLRSVDRPTAKGWELPGGRPRQPVSTVPEGPASSRQRS). Residue Ser-593 is modified to Phosphoserine. The interval 618-661 (AGPGGATLLAPSRSPPASAGSTEEPTGSGEAADASPEPSADEDD) is disordered. Residues 623–636 (ATLLAPSRSPPASA) show a composition bias toward low complexity. Arg-749 bears the Asymmetric dimethylarginine; alternate mark. At Arg-749 the chain carries Omega-N-methylarginine; alternate.

The protein localises to the apical cell membrane. It is found in the cell projection. The protein resides in the cilium. It localises to the cell junction. Its subcellular location is the adherens junction. In terms of biological role, may be involved in the control of adherens junction integrity. The protein is Apical junction component 1 homolog (Ajm1) of Mus musculus (Mouse).